Here is an 83-residue protein sequence, read N- to C-terminus: U5-theraphotoxin-Hs1a 3 (83 aa).

The signal sequence occupies residues methionine 1–alanine 21. Residues serine 22–arginine 49 constitute a propeptide that is removed on maturation. 3 disulfides stabilise this stretch: cysteine 51-cysteine 63, cysteine 56-cysteine 68, and cysteine 62-cysteine 75.

The protein belongs to the neurotoxin 10 (Hwtx-1) family. 51 (Hntx-8) subfamily. Hntx-8 sub-subfamily. Expressed by the venom gland.

It localises to the secreted. Functionally, agglutinates erythrocytes. The sequence is that of U5-theraphotoxin-Hs1a 3 from Cyriopagopus schmidti (Chinese bird spider).